The following is a 419-amino-acid chain: Voltage-gated potassium channel subunit beta-1 (419 aa).

Positions 1–51 (MLAARTGAAGSQIAEESSKLRKQAAFSGGSKDRSPKKASENVKDSSLSPSG) are disordered. Over residues 30-43 (SKDRSPKKASENVK) the composition is skewed to basic and acidic residues. Threonine 108, tryptophan 109, glutamine 115, and aspartate 137 together coordinate NADP(+). The Proton donor/acceptor role is filled by tyrosine 142. Residues asparagine 210, serine 240, arginine 241, glutamine 266, tryptophan 295, serine 296, proline 297, leucine 298, alanine 299, cysteine 300, lysine 306, arginine 316, glycine 375, serine 377, glutamine 381, glutamate 384, and asparagine 385 each contribute to the NADP(+) site.

Belongs to the shaker potassium channel beta subunit family. In terms of assembly, homotetramer. Interaction with tetrameric potassium channel alpha subunits gives rise to a heterooctamer. Identified in potassium channel complexes containing KCNA1, KCNA2, KCNA4, KCNA5, KCNA6, KCNAB1 and KCNAB2. Part of a complex containing KCNA1, KCNA4 and LGI1; interaction with LGI1 inhibits down-regulation of KCNA1 channel activity. Interacts with the dimer formed by GNB1 and GNG2; this enhances KCNA1 binding. Interacts with SQSTM1. Detected in portal vein myocytes (at protein level).

The protein localises to the cytoplasm. It localises to the membrane. It is found in the cell membrane. It catalyses the reaction a primary alcohol + NADP(+) = an aldehyde + NADPH + H(+). The enzyme catalyses a secondary alcohol + NADP(+) = a ketone + NADPH + H(+). Regulatory subunit of the voltage-gated potassium (Kv) channels composed of pore-forming and potassium-conducting alpha subunits and of regulatory beta subunits. The beta-1/KCNAB1 cytoplasmic subunit mediates closure of delayed rectifier potassium channels by physically obstructing the pore via its N-terminal domain and increases the speed of channel closure for other family members. Promotes the inactivation of KCNA1, KCNA2, KCNA4, KCNA5 and KCNA6 alpha subunit-containing channels. Displays nicotinamide adenine dinucleotide phosphate (NADPH)-dependent aldoketoreductase activity by catalyzing the NADPH-dependent reduction of a variety of endogenous aldehydes and ketones. The binding of NADPH is required for efficient down-regulation of potassium channel activity. Oxidation of the bound NADPH restrains N-terminal domain from blocking the channel, thereby decreasing N-type inactivation of potassium channel activity. This Oryctolagus cuniculus (Rabbit) protein is Voltage-gated potassium channel subunit beta-1 (KCNAB1).